Here is a 287-residue protein sequence, read N- to C-terminus: 2-dehydro-3-deoxyphosphooctonate aldolase (287 aa).

The protein belongs to the KdsA family.

The protein localises to the cytoplasm. It carries out the reaction D-arabinose 5-phosphate + phosphoenolpyruvate + H2O = 3-deoxy-alpha-D-manno-2-octulosonate-8-phosphate + phosphate. It participates in carbohydrate biosynthesis; 3-deoxy-D-manno-octulosonate biosynthesis; 3-deoxy-D-manno-octulosonate from D-ribulose 5-phosphate: step 2/3. Its pathway is bacterial outer membrane biogenesis; lipopolysaccharide biosynthesis. This chain is 2-dehydro-3-deoxyphosphooctonate aldolase, found in Nitrobacter winogradskyi (strain ATCC 25391 / DSM 10237 / CIP 104748 / NCIMB 11846 / Nb-255).